Here is a 116-residue protein sequence, read N- to C-terminus: Large ribosomal subunit protein uL18 (116 aa).

The protein belongs to the universal ribosomal protein uL18 family. In terms of assembly, part of the 50S ribosomal subunit; part of the 5S rRNA/L5/L18/L25 subcomplex. Contacts the 5S and 23S rRNAs.

In terms of biological role, this is one of the proteins that bind and probably mediate the attachment of the 5S RNA into the large ribosomal subunit, where it forms part of the central protuberance. This Alcanivorax borkumensis (strain ATCC 700651 / DSM 11573 / NCIMB 13689 / SK2) protein is Large ribosomal subunit protein uL18.